We begin with the raw amino-acid sequence, 319 residues long: Chromoplast-specific carotenoid-associated protein C1, chromoplastic (319 aa).

The transit peptide at 1–55 (MTSIAFWNAFTVNPFPAAARRSPPPLTPFTSGALSPARKPRILEISHPRTLPSFR) directs the protein to the chromoplast.

The protein belongs to the PAP/fibrillin family. Expressed in flower buds and floral lip tissues. Not detected in roots and leaves. Specifically expressed in conical papillate cells of adaxial epidermis of lip tissues.

The protein localises to the plastid. It is found in the chromoplast. Functionally, may be involved in carotenoid sequestration within chromoplasts. The sequence is that of Chromoplast-specific carotenoid-associated protein C1, chromoplastic (CHRC1) from Oncidium hybrid cultivar (Orchid).